A 373-amino-acid polypeptide reads, in one-letter code: Chaperone protein DnaJ (373 aa).

The J domain occupies 4–68 (DYYEILGLTK…VKREQYNQFG (65 aa)). A CR-type zinc finger spans residues 142–224 (GKEIVEPLEK…CKGKTHTKTT (83 aa)). Positions 155, 158, 172, 175, 198, 201, 212, and 215 each coordinate Zn(2+). 4 CXXCXGXG motif repeats span residues 155–162 (CNTCNGSG), 172–179 (CTQCSGMG), 198–205 (CSKCNGIG), and 212–219 (CLICKGKT).

The protein belongs to the DnaJ family. As to quaternary structure, homodimer. Requires Zn(2+) as cofactor.

The protein localises to the cytoplasm. Participates actively in the response to hyperosmotic and heat shock by preventing the aggregation of stress-denatured proteins and by disaggregating proteins, also in an autonomous, DnaK-independent fashion. Unfolded proteins bind initially to DnaJ; upon interaction with the DnaJ-bound protein, DnaK hydrolyzes its bound ATP, resulting in the formation of a stable complex. GrpE releases ADP from DnaK; ATP binding to DnaK triggers the release of the substrate protein, thus completing the reaction cycle. Several rounds of ATP-dependent interactions between DnaJ, DnaK and GrpE are required for fully efficient folding. Also involved, together with DnaK and GrpE, in the DNA replication of plasmids through activation of initiation proteins. This Mycoplasma mobile (strain ATCC 43663 / 163K / NCTC 11711) (Mesomycoplasma mobile) protein is Chaperone protein DnaJ.